Reading from the N-terminus, the 35-residue chain is Conotoxin Cal6.1d (35 aa).

A propeptide spanning residues 1–8 is cleaved from the precursor; sequence GLTRPSKR. Intrachain disulfides connect Cys-9/Cys-25, Cys-16/Cys-29, and Cys-24/Cys-34.

The protein belongs to the conotoxin O1 superfamily. As to expression, expressed by the venom duct.

The protein localises to the secreted. In terms of biological role, probable neurotoxin with unknown target. Possibly targets ion channels. The sequence is that of Conotoxin Cal6.1d from Californiconus californicus (California cone).